Here is a 437-residue protein sequence, read N- to C-terminus: Type II methyltransferase M.HgiCII (437 aa).

Residues 4–431 enclose the SAM-dependent MTase C5-type domain; it reads FRFIDLFAGI…KALPNDHLFE (428 aa). Cys-75 is an active-site residue.

Belongs to the class I-like SAM-binding methyltransferase superfamily. C5-methyltransferase family.

The enzyme catalyses a 2'-deoxycytidine in DNA + S-adenosyl-L-methionine = a 5-methyl-2'-deoxycytidine in DNA + S-adenosyl-L-homocysteine + H(+). Its function is as follows. A methylase that recognizes the double-stranded sequence 5'-GGWCC-3', methylates C-? on both strands and protects the DNA from cleavage by the HgiCII endonuclease. The protein is Type II methyltransferase M.HgiCII of Herpetosiphon aurantiacus (Herpetosiphon giganteus).